The chain runs to 164 residues: Ribosome maturation factor RimM (164 aa).

In terms of domain architecture, PRC barrel spans 90–161 (KGSYFIADLI…TVTIKPLEIW (72 aa)).

It belongs to the RimM family. As to quaternary structure, binds ribosomal protein uS19.

Its subcellular location is the cytoplasm. Its function is as follows. An accessory protein needed during the final step in the assembly of 30S ribosomal subunit, possibly for assembly of the head region. Essential for efficient processing of 16S rRNA. May be needed both before and after RbfA during the maturation of 16S rRNA. It has affinity for free ribosomal 30S subunits but not for 70S ribosomes. The protein is Ribosome maturation factor RimM of Clostridium botulinum (strain Hall / ATCC 3502 / NCTC 13319 / Type A).